The sequence spans 152 residues: D-aminoacyl-tRNA deacylase (152 aa).

Positions 142–143 match the Gly-cisPro motif, important for rejection of L-amino acids motif; that stretch reads GP.

Belongs to the DTD family. In terms of assembly, homodimer.

The protein resides in the cytoplasm. It catalyses the reaction glycyl-tRNA(Ala) + H2O = tRNA(Ala) + glycine + H(+). The enzyme catalyses a D-aminoacyl-tRNA + H2O = a tRNA + a D-alpha-amino acid + H(+). Its function is as follows. An aminoacyl-tRNA editing enzyme that deacylates mischarged D-aminoacyl-tRNAs. Also deacylates mischarged glycyl-tRNA(Ala), protecting cells against glycine mischarging by AlaRS. Acts via tRNA-based rather than protein-based catalysis; rejects L-amino acids rather than detecting D-amino acids in the active site. By recycling D-aminoacyl-tRNA to D-amino acids and free tRNA molecules, this enzyme counteracts the toxicity associated with the formation of D-aminoacyl-tRNA entities in vivo and helps enforce protein L-homochirality. This is D-aminoacyl-tRNA deacylase from Burkholderia lata (strain ATCC 17760 / DSM 23089 / LMG 22485 / NCIMB 9086 / R18194 / 383).